We begin with the raw amino-acid sequence, 88 residues long: MPRLVALVKGRVQGVGYRAFAQKKALELGLSGYAENLPDGRVEVVAEGPKEALELFLHHLKQGPRLARVEAVEVQWGEEAGLKGFHVY.

The Acylphosphatase-like domain occupies 3–88; the sequence is RLVALVKGRV…EAGLKGFHVY (86 aa). Residues arginine 18 and asparagine 36 contribute to the active site.

It belongs to the acylphosphatase family.

The catalysed reaction is an acyl phosphate + H2O = a carboxylate + phosphate + H(+). The polypeptide is Acylphosphatase (acyP) (Thermus thermophilus (strain ATCC BAA-163 / DSM 7039 / HB27)).